A 189-amino-acid chain; its full sequence is Ribosome maturation factor RimM (189 aa).

The 74-residue stretch at 96–169 (EDEFYYADLE…TLLIDPLAAG (74 aa)) folds into the PRC barrel domain.

The protein belongs to the RimM family. As to quaternary structure, binds ribosomal protein uS19.

It localises to the cytoplasm. In terms of biological role, an accessory protein needed during the final step in the assembly of 30S ribosomal subunit, possibly for assembly of the head region. Essential for efficient processing of 16S rRNA. May be needed both before and after RbfA during the maturation of 16S rRNA. It has affinity for free ribosomal 30S subunits but not for 70S ribosomes. The sequence is that of Ribosome maturation factor RimM from Rhizobium johnstonii (strain DSM 114642 / LMG 32736 / 3841) (Rhizobium leguminosarum bv. viciae).